Here is a 303-residue protein sequence, read N- to C-terminus: Monoglyceride lipase (303 aa).

Thr10 carries the post-translational modification Phosphothreonine. Residue Tyr58 is modified to 3'-nitrotyrosine. Ser122 acts as the Nucleophile in catalysis. Ser189 carries the phosphoserine modification. Residues Asp239 and His269 each act as charge relay system in the active site.

This sequence belongs to the AB hydrolase superfamily. Monoacylglycerol lipase family. As to quaternary structure, homodimer. As to expression, ubiquitous.

It is found in the cytoplasm. The protein resides in the cytosol. The protein localises to the membrane. The enzyme catalyses Hydrolyzes glycerol monoesters of long-chain fatty acids.. It carries out the reaction a 1-acylglycerol + H2O = glycerol + a fatty acid + H(+). It catalyses the reaction a 2-acylglycerol + H2O = glycerol + a fatty acid + H(+). The catalysed reaction is 2-(5Z,8Z,11Z,14Z-eicosatetraenoyl)-glycerol + H2O = glycerol + (5Z,8Z,11Z,14Z)-eicosatetraenoate + H(+). The enzyme catalyses 1-octanoylglycerol + H2O = octanoate + glycerol + H(+). It carries out the reaction 1-decanoylglycerol + H2O = decanoate + glycerol + H(+). It catalyses the reaction 1-dodecanoylglycerol + H2O = dodecanoate + glycerol + H(+). The catalysed reaction is 1-tetradecanoylglycerol + H2O = tetradecanoate + glycerol + H(+). The enzyme catalyses 2-hexadecanoylglycerol + H2O = glycerol + hexadecanoate + H(+). It carries out the reaction 1-(9Z-octadecenoyl)-glycerol + H2O = glycerol + (9Z)-octadecenoate + H(+). It catalyses the reaction 2-(9Z-octadecenoyl)-glycerol + H2O = glycerol + (9Z)-octadecenoate + H(+). The catalysed reaction is 2-(9Z,12Z-octadecadienoyl)-glycerol + H2O = (9Z,12Z)-octadecadienoate + glycerol + H(+). The enzyme catalyses 1-(5Z,8Z,11Z,14Z-eicosatetraenoyl)-glycerol + H2O = glycerol + (5Z,8Z,11Z,14Z)-eicosatetraenoate + H(+). It carries out the reaction 1-(9Z,12Z-octadecadienoyl)-glycerol + H2O = (9Z,12Z)-octadecadienoate + glycerol + H(+). It catalyses the reaction 1-hexadecanoylglycerol + H2O = glycerol + hexadecanoate + H(+). The catalysed reaction is 1-octadecanoylglycerol + H2O = octadecanoate + glycerol + H(+). The enzyme catalyses prostaglandin E2 1-glyceryl ester + H2O = prostaglandin E2 + glycerol + H(+). It carries out the reaction prostaglandin D2-1-glycerol ester + H2O = prostaglandin D2 + glycerol + H(+). It catalyses the reaction 2-glyceryl-15-deoxy-Delta(12,14)-prostaglandin J2 + H2O = 15-deoxy-Delta(12,14)-prostaglandin J2 + glycerol + H(+). The catalysed reaction is prostaglandin F2alpha 1-glyceryl ester + H2O = prostaglandin F2alpha + glycerol + H(+). It participates in glycerolipid metabolism; triacylglycerol degradation. Its function is as follows. Converts monoacylglycerides to free fatty acids and glycerol. Hydrolyzes the endocannabinoid 2-arachidonoylglycerol, and thereby contributes to the regulation of endocannabinoid signaling, nociperception and perception of pain. Regulates the levels of fatty acids that serve as signaling molecules and promote cancer cell migration, invasion and tumor growth. In Mus musculus (Mouse), this protein is Monoglyceride lipase.